The following is a 348-amino-acid chain: DNA-directed RNA polymerase subunit alpha (348 aa).

An alpha N-terminal domain (alpha-NTD) region spans residues 1–243 (MLIKQGDRLI…DQISVFINFD (243 aa)). Positions 260-348 (VNENLFKGID…WLKRKQQNEA (89 aa)) are alpha C-terminal domain (alpha-CTD).

Belongs to the RNA polymerase alpha chain family. In terms of assembly, homodimer. The RNAP catalytic core consists of 2 alpha, 1 beta, 1 beta' and 1 omega subunit. When a sigma factor is associated with the core the holoenzyme is formed, which can initiate transcription.

It carries out the reaction RNA(n) + a ribonucleoside 5'-triphosphate = RNA(n+1) + diphosphate. Its function is as follows. DNA-dependent RNA polymerase catalyzes the transcription of DNA into RNA using the four ribonucleoside triphosphates as substrates. The chain is DNA-directed RNA polymerase subunit alpha from Oleidesulfovibrio alaskensis (strain ATCC BAA-1058 / DSM 17464 / G20) (Desulfovibrio alaskensis).